The sequence spans 412 residues: 2,3-bisphosphoglycerate-independent phosphoglycerate mutase (412 aa).

It belongs to the BPG-independent phosphoglycerate mutase family. A-PGAM subfamily.

The catalysed reaction is (2R)-2-phosphoglycerate = (2R)-3-phosphoglycerate. It functions in the pathway carbohydrate degradation; glycolysis; pyruvate from D-glyceraldehyde 3-phosphate: step 3/5. Its function is as follows. Catalyzes the interconversion of 2-phosphoglycerate and 3-phosphoglycerate. The chain is 2,3-bisphosphoglycerate-independent phosphoglycerate mutase from Methanobrevibacter smithii (strain ATCC 35061 / DSM 861 / OCM 144 / PS).